The primary structure comprises 325 residues: Elongation factor P--(R)-beta-lysine ligase (325 aa).

Residue 76–78 (SPE) participates in substrate binding. ATP is bound by residues 100–102 (RNE) and Asn-109. Position 118 (Tyr-118) interacts with substrate. 244–245 (EL) lines the ATP pocket. A substrate-binding site is contributed by Glu-251. Gly-300 lines the ATP pocket.

It belongs to the class-II aminoacyl-tRNA synthetase family. EpmA subfamily. Homodimer.

The enzyme catalyses D-beta-lysine + L-lysyl-[protein] + ATP = N(6)-((3R)-3,6-diaminohexanoyl)-L-lysyl-[protein] + AMP + diphosphate + H(+). Its function is as follows. With EpmB is involved in the beta-lysylation step of the post-translational modification of translation elongation factor P (EF-P) on 'Lys-34'. Catalyzes the ATP-dependent activation of (R)-beta-lysine produced by EpmB, forming a lysyl-adenylate, from which the beta-lysyl moiety is then transferred to the epsilon-amino group of EF-P 'Lys-34'. This Salmonella typhi protein is Elongation factor P--(R)-beta-lysine ligase.